A 340-amino-acid chain; its full sequence is uncharacterized protein (340 aa).

The disordered stretch occupies residues 284 to 340 (DHSTPTNYQQETPASQQQLDQENEPIKPSKKSNSSSLPRGTTQPKSNSINRVSKLID). 2 stretches are compositionally biased toward polar residues: residues 286 to 303 (STPT…QQLD) and 320 to 334 (LPRG…SINR).

This is an uncharacterized protein from Mycoplasma genitalium (strain ATCC 33530 / DSM 19775 / NCTC 10195 / G37) (Mycoplasmoides genitalium).